Here is a 168-residue protein sequence, read N- to C-terminus: MIIGIWAEDEAGLIGEADKMPWSLPAEQQHFKETTMNQVILMGRKTFEGMNKRVLPGRISIILTRDETYQSDNEKVLIMHSPKEVLDWYHKQNKDLFITGGAEILALFESELELLYRTVVHEKFKGDTYFPSTFDFGRFKLVSEKFHDKDERNSYTFTIKKYEKVKQP.

Residues M1–K164 enclose the DHFR domain. I5 to A7 contacts substrate. Residues W6–A7 and I14–K19 each bind NADP(+). E27 contributes to the substrate binding site. G43–T46 contacts NADP(+). A substrate-binding site is contributed by R58. NADP(+) is bound by residues L63–D66 and T99–I104. Residue T118 participates in substrate binding.

The protein belongs to the dihydrofolate reductase family.

It carries out the reaction (6S)-5,6,7,8-tetrahydrofolate + NADP(+) = 7,8-dihydrofolate + NADPH + H(+). It functions in the pathway cofactor biosynthesis; tetrahydrofolate biosynthesis; 5,6,7,8-tetrahydrofolate from 7,8-dihydrofolate: step 1/1. Key enzyme in folate metabolism. Catalyzes an essential reaction for de novo glycine and purine synthesis, and for DNA precursor synthesis. This chain is Dihydrofolate reductase (folA), found in Lactococcus lactis subsp. lactis (strain IL1403) (Streptococcus lactis).